A 367-amino-acid polypeptide reads, in one-letter code: NADH-quinone oxidoreductase subunit H (367 aa).

The next 8 membrane-spanning stretches (helical) occupy residues 18–38, 87–107, 132–152, 180–200, 204–224, 257–277, 291–311, and 328–348; these read VLLFLKIIIVIISVMVSVAYL, LCFLIAPVITFTLALLGWAVI, IGVLYILAISSLGVYGIIIAG, LTIVTVLLATGSLKLGEIVIA, MPYWIDLLLLPMAFMFFISAL, FFLGEYANMILMSAMAVIFFF, IIPGTIWFIFKIVILLFCFIW, and GWKVFLPISLFWVILVSGILV.

Belongs to the complex I subunit 1 family. In terms of assembly, NDH-1 is composed of 14 different subunits. Subunits NuoA, H, J, K, L, M, N constitute the membrane sector of the complex.

The protein localises to the cell inner membrane. It catalyses the reaction a quinone + NADH + 5 H(+)(in) = a quinol + NAD(+) + 4 H(+)(out). Functionally, NDH-1 shuttles electrons from NADH, via FMN and iron-sulfur (Fe-S) centers, to quinones in the respiratory chain. The immediate electron acceptor for the enzyme in this species is believed to be ubiquinone. Couples the redox reaction to proton translocation (for every two electrons transferred, four hydrogen ions are translocated across the cytoplasmic membrane), and thus conserves the redox energy in a proton gradient. This subunit may bind ubiquinone. This chain is NADH-quinone oxidoreductase subunit H, found in Ehrlichia ruminantium (strain Gardel).